A 451-amino-acid polypeptide reads, in one-letter code: Bifunctional protein GlmU (451 aa).

Positions 1-230 are pyrophosphorylase; that stretch reads MNNPIAAIVL…PADVGGINSR (230 aa). UDP-N-acetyl-alpha-D-glucosamine contacts are provided by residues 10-13, lysine 24, glutamine 74, 79-80, 102-104, glycine 142, glutamate 156, asparagine 171, and asparagine 228; these read LAAG, GT, and YGD. Residue aspartate 104 coordinates Mg(2+). Asparagine 228 is a Mg(2+) binding site. The segment at 231 to 251 is linker; it reads AELAAAEAQWQAFRREEAMAA. The segment at 252–451 is N-acetyltransferase; that stretch reads GASLRAPETV…RKKKAAEQKK (200 aa). Residues arginine 317 and lysine 335 each contribute to the UDP-N-acetyl-alpha-D-glucosamine site. Histidine 347 (proton acceptor) is an active-site residue. 2 residues coordinate UDP-N-acetyl-alpha-D-glucosamine: tyrosine 350 and asparagine 361. Acetyl-CoA is bound by residues alanine 364, 370–371, serine 389, alanine 407, and arginine 424; that span reads NY.

It in the N-terminal section; belongs to the N-acetylglucosamine-1-phosphate uridyltransferase family. In the C-terminal section; belongs to the transferase hexapeptide repeat family. As to quaternary structure, homotrimer. Mg(2+) is required as a cofactor.

It localises to the cytoplasm. The catalysed reaction is alpha-D-glucosamine 1-phosphate + acetyl-CoA = N-acetyl-alpha-D-glucosamine 1-phosphate + CoA + H(+). The enzyme catalyses N-acetyl-alpha-D-glucosamine 1-phosphate + UTP + H(+) = UDP-N-acetyl-alpha-D-glucosamine + diphosphate. The protein operates within nucleotide-sugar biosynthesis; UDP-N-acetyl-alpha-D-glucosamine biosynthesis; N-acetyl-alpha-D-glucosamine 1-phosphate from alpha-D-glucosamine 6-phosphate (route II): step 2/2. Its pathway is nucleotide-sugar biosynthesis; UDP-N-acetyl-alpha-D-glucosamine biosynthesis; UDP-N-acetyl-alpha-D-glucosamine from N-acetyl-alpha-D-glucosamine 1-phosphate: step 1/1. It functions in the pathway bacterial outer membrane biogenesis; LPS lipid A biosynthesis. Catalyzes the last two sequential reactions in the de novo biosynthetic pathway for UDP-N-acetylglucosamine (UDP-GlcNAc). The C-terminal domain catalyzes the transfer of acetyl group from acetyl coenzyme A to glucosamine-1-phosphate (GlcN-1-P) to produce N-acetylglucosamine-1-phosphate (GlcNAc-1-P), which is converted into UDP-GlcNAc by the transfer of uridine 5-monophosphate (from uridine 5-triphosphate), a reaction catalyzed by the N-terminal domain. The polypeptide is Bifunctional protein GlmU (Sphingopyxis alaskensis (strain DSM 13593 / LMG 18877 / RB2256) (Sphingomonas alaskensis)).